The sequence spans 536 residues: CTP synthase (536 aa).

The interval 1 to 267 (MSKFVFVTGG…CKQTLNCLEL (267 aa)) is amidoligase domain. Serine 13 provides a ligand contact to CTP. Residue serine 13 participates in UTP binding. Residues 14–19 (SIGKGI) and aspartate 71 each bind ATP. 2 residues coordinate Mg(2+): aspartate 71 and glutamate 141. CTP-binding positions include 148 to 150 (DIE), 188 to 193 (KTKPTQ), and lysine 224. UTP contacts are provided by residues 188–193 (KTKPTQ) and lysine 224. Residues 292–534 (KVALVGKYIE…IKASQEKLEQ (243 aa)) form the Glutamine amidotransferase type-1 domain. Glycine 354 serves as a coordination point for L-glutamine. Cysteine 381 serves as the catalytic Nucleophile; for glutamine hydrolysis. L-glutamine contacts are provided by residues 382–385 (LGMQ), glutamate 405, and arginine 462. Active-site residues include histidine 507 and glutamate 509.

Belongs to the CTP synthase family. In terms of assembly, homotetramer.

It catalyses the reaction UTP + L-glutamine + ATP + H2O = CTP + L-glutamate + ADP + phosphate + 2 H(+). It carries out the reaction L-glutamine + H2O = L-glutamate + NH4(+). The enzyme catalyses UTP + NH4(+) + ATP = CTP + ADP + phosphate + 2 H(+). It participates in pyrimidine metabolism; CTP biosynthesis via de novo pathway; CTP from UDP: step 2/2. Allosterically activated by GTP, when glutamine is the substrate; GTP has no effect on the reaction when ammonia is the substrate. The allosteric effector GTP functions by stabilizing the protein conformation that binds the tetrahedral intermediate(s) formed during glutamine hydrolysis. Inhibited by the product CTP, via allosteric rather than competitive inhibition. Functionally, catalyzes the ATP-dependent amination of UTP to CTP with either L-glutamine or ammonia as the source of nitrogen. Regulates intracellular CTP levels through interactions with the four ribonucleotide triphosphates. This Prochlorococcus marinus subsp. pastoris (strain CCMP1986 / NIES-2087 / MED4) protein is CTP synthase.